The sequence spans 94 residues: Ribonuclease VapC3 (94 aa).

Aspartate 6 is a binding site for Mg(2+).

Belongs to the PINc/VapC protein family. Requires Mg(2+) as cofactor.

Its function is as follows. Toxic component of a type II toxin-antitoxin (TA) system. An RNase. Its cognate antitoxin is VapB3. The chain is Ribonuclease VapC3 (vapC3) from Methanocaldococcus jannaschii (strain ATCC 43067 / DSM 2661 / JAL-1 / JCM 10045 / NBRC 100440) (Methanococcus jannaschii).